The following is a 257-amino-acid chain: MITTSYRPSEHTIKTAKQLSKELNMPYCGRNKQTVEHLLKSAERDLLVVGKERFELYTKQGAKFFFHPNTAMFRAKRFLQGEKEPMLRAAGLSEGDTFLDCTLGLGSDAIIASMAVGETGSVVGIEKNHLVSVLVRTGLHSWETGIEELQAAMRRIQVKNGDCFEHIKQLPDNSVDVVYFDPMFHEPVETSDGIAPLRDLAEDSVLHEGCINEAVRVARKSVVLKDHWKSPRFEQFGFNVMKRKTALFHYGVIQTSP.

This is an uncharacterized protein from Bacillus subtilis (strain 168).